A 215-amino-acid polypeptide reads, in one-letter code: Adenylate kinase (215 aa).

10 to 15 (GAGKGT) provides a ligand contact to ATP. An NMP region spans residues 30 to 59 (STGDMLRAAVKAETELGLKAKSVMDSGGLV). AMP-binding positions include T31, R36, 57-59 (GLV), 85-88 (GFPR), and Q92. The LID stretch occupies residues 122–159 (GRRVHEGSGRIYHTIFNPPKVEGIDDVTGEPLLQRKDD). ATP is bound by residues R123 and 132–133 (IY). 2 residues coordinate AMP: R156 and R167. G201 contributes to the ATP binding site.

The protein belongs to the adenylate kinase family. In terms of assembly, monomer.

The protein resides in the cytoplasm. The catalysed reaction is AMP + ATP = 2 ADP. It functions in the pathway purine metabolism; AMP biosynthesis via salvage pathway; AMP from ADP: step 1/1. Its function is as follows. Catalyzes the reversible transfer of the terminal phosphate group between ATP and AMP. Plays an important role in cellular energy homeostasis and in adenine nucleotide metabolism. The chain is Adenylate kinase from Pseudomonas syringae pv. syringae (strain B728a).